Reading from the N-terminus, the 259-residue chain is MNKPVLVSFLVSGDPNPDATLKFMKTLDKYSGVIELGIPFSDPVADGPTIQAADVRALSNGFKIAKSFEVLKEFRKESDTPVILMTYYNPVFKRGIENFVISAKEAGAKGLIIVDLPLQEATEYREICKKHEMGTVFLAAPNTPEERLKISDEASTEFLYLISTFGITGARDTFEQMTFDFIKRARTTCKGKICVGFGISKGSHAESLIEQGADGVIVGSAFVDIIKNYGDSEEALVKLEEFAKELSEGIDKGYEKRNK.

Catalysis depends on proton acceptor residues glutamate 35 and aspartate 46.

The protein belongs to the TrpA family. As to quaternary structure, tetramer of two alpha and two beta chains.

The enzyme catalyses (1S,2R)-1-C-(indol-3-yl)glycerol 3-phosphate + L-serine = D-glyceraldehyde 3-phosphate + L-tryptophan + H2O. It functions in the pathway amino-acid biosynthesis; L-tryptophan biosynthesis; L-tryptophan from chorismate: step 5/5. The alpha subunit is responsible for the aldol cleavage of indoleglycerol phosphate to indole and glyceraldehyde 3-phosphate. The polypeptide is Tryptophan synthase alpha chain (Methanococcus maripaludis (strain C5 / ATCC BAA-1333)).